The primary structure comprises 889 residues: Cytoplasmic aconitate hydratase (889 aa).

Substrate is bound by residues Gln86 and 205 to 207; that span reads DSH. [4Fe-4S] cluster contacts are provided by Cys437, Cys503, and Cys506. Substrate-binding positions include Arg536, Arg541, Arg699, and 779 to 780; that span reads SR.

This sequence belongs to the aconitase/IPM isomerase family. Interacts (when associated with the 4Fe-4S) with FBXL5. Interacts with frataxin(81-210). [4Fe-4S] cluster serves as cofactor.

The protein localises to the cytoplasm. Its subcellular location is the cytosol. The enzyme catalyses citrate = D-threo-isocitrate. Its function is as follows. Bifunctional iron sensor that switches between 2 activities depending on iron availability. Iron deprivation, promotes its mRNA binding activity through which it regulates the expression of genes involved in iron uptake, sequestration and utilization. Binds to iron-responsive elements (IRES) in the untranslated region of target mRNAs preventing for instance the translation of ferritin and aminolevulinic acid synthase and stabilizing the transferrin receptor mRNA. Conversely, when cellular iron levels are high, binds a 4Fe-4S cluster which precludes RNA binding activity and promotes the aconitase activity, the isomerization of citrate to isocitrate via cis-aconitate. This is Cytoplasmic aconitate hydratase (ACO1) from Oryctolagus cuniculus (Rabbit).